We begin with the raw amino-acid sequence, 341 residues long: Outer membrane protein assembly factor BamD (341 aa).

The signal sequence occupies residues methionine 1–alanine 17. Residue cysteine 18 is the site of N-palmitoyl cysteine attachment. Cysteine 18 is lipidated: S-diacylglycerol cysteine. Over residues aspartate 289–aspartate 316 the composition is skewed to basic and acidic residues. Residues aspartate 289–serine 330 are disordered. Residues glutamate 317–aspartate 326 are compositionally biased toward acidic residues.

The protein belongs to the BamD family. In terms of assembly, part of the Bam complex.

It is found in the cell outer membrane. Functionally, part of the outer membrane protein assembly complex, which is involved in assembly and insertion of beta-barrel proteins into the outer membrane. The sequence is that of Outer membrane protein assembly factor BamD from Pseudomonas aeruginosa (strain ATCC 15692 / DSM 22644 / CIP 104116 / JCM 14847 / LMG 12228 / 1C / PRS 101 / PAO1).